The sequence spans 366 residues: Endophilin-B1 (366 aa).

The membrane-binding amphipathic helix stretch occupies residues Met-1–Leu-30. A required for membrane binding region spans residues Met-1–Glu-37. The BAR domain occupies Glu-27–Ser-261. Coiled-coil stretches lie at residues Glu-34–Gln-54 and Lys-160–Ala-185. Residues Ser-306 to Asn-366 enclose the SH3 domain.

It belongs to the endophilin family. In terms of assembly, homodimer, and heterodimer with SH3GLB2. Binds BAX. Binds DNM1, HTT, AMPH, BIN1 and ARFGAP1.

The protein resides in the cytoplasm. The protein localises to the golgi apparatus membrane. Its subcellular location is the mitochondrion outer membrane. Its function is as follows. May be required for normal outer mitochondrial membrane dynamics. Required for coatomer-mediated retrograde transport in certain cells. May recruit other proteins to membranes with high curvature. May promote membrane fusion. This is Endophilin-B1 from Gallus gallus (Chicken).